Reading from the N-terminus, the 232-residue chain is Very-long-chain (3R)-3-hydroxyacyl-CoA dehydratase 4 (232 aa).

Over 1–19 the chain is Cytoplasmic; it reads MGPLALPAWLQPRYRKNAY. Residues 20-40 form a helical membrane-spanning segment; that stretch reads LFIYYLIQFCGHSWIFTNMTV. The Lumenal segment spans residues 41–56; the sequence is RFFSFGKDSMVDTFYA. A helical membrane pass occupies residues 57-77; the sequence is IGLVMRLCQSVSLLELLHIYV. Residues 78–112 lie on the Cytoplasmic side of the membrane; that stretch reads GIESNHLLPRFLQLTERIIILFVVITSQEEVQEKY. The chain crosses the membrane as a helical span at residues 113–133; that stretch reads VVCVLFVFWNLLDMVRYTYSM. Over 134–135 the chain is Lumenal; it reads LS. The chain crosses the membrane as a helical span at residues 136-156; it reads VIGISYAVLTWLSQTLWMPIY. Tyr156 is a catalytic residue. Residue Pro157 is a topological domain, cytoplasmic. Residues 158–178 form a helical membrane-spanning segment; it reads LCVLAEAFAIYQSLPYFESFG. Glu163 is an active-site residue. Over 179-189 the chain is Lumenal; sequence TYSTKLPFDLS. The chain crosses the membrane as a helical span at residues 190–210; the sequence is IYFPYVLKIYLMMLFIGMYFT. Topologically, residues 211 to 232 are cytoplasmic; sequence YSHLYSERRDILGIFPIKKKKM.

It belongs to the very long-chain fatty acids dehydratase HACD family. May interact with enzymes of the ELO family (including ELOVL1); with those enzymes that mediate condensation, the first of the four steps of the reaction cycle responsible for fatty acids elongation, may be part of a larger fatty acids elongase complex. Highly expressed in leukocytes, and low expression in heart, spleen, kidney, and placenta.

Its subcellular location is the endoplasmic reticulum membrane. It carries out the reaction a very-long-chain (3R)-3-hydroxyacyl-CoA = a very-long-chain (2E)-enoyl-CoA + H2O. The catalysed reaction is (3R)-hydroxyhexadecanoyl-CoA = (2E)-hexadecenoyl-CoA + H2O. Its pathway is lipid metabolism; fatty acid biosynthesis. Its function is as follows. Catalyzes the third of the four reactions of the long-chain fatty acids elongation cycle. This endoplasmic reticulum-bound enzymatic process, allows the addition of two carbons to the chain of long- and very long-chain fatty acids/VLCFAs per cycle. This enzyme catalyzes the dehydration of the 3-hydroxyacyl-CoA intermediate into trans-2,3-enoyl-CoA, within each cycle of fatty acid elongation. Thereby, it participates in the production of VLCFAs of different chain lengths that are involved in multiple biological processes as precursors of membrane lipids and lipid mediators. The polypeptide is Very-long-chain (3R)-3-hydroxyacyl-CoA dehydratase 4 (Homo sapiens (Human)).